Consider the following 70-residue polypeptide: Exodeoxyribonuclease 7 small subunit (70 aa).

Belongs to the XseB family. As to quaternary structure, heterooligomer composed of large and small subunits.

It is found in the cytoplasm. It carries out the reaction Exonucleolytic cleavage in either 5'- to 3'- or 3'- to 5'-direction to yield nucleoside 5'-phosphates.. Bidirectionally degrades single-stranded DNA into large acid-insoluble oligonucleotides, which are then degraded further into small acid-soluble oligonucleotides. In Streptococcus sanguinis (strain SK36), this protein is Exodeoxyribonuclease 7 small subunit.